A 275-amino-acid chain; its full sequence is Centromere protein V (275 aa).

Low complexity-rich tracts occupy residues 1–10 (MRRSRSSAAA) and 17–51 (RSGA…QAGS). The segment at 1–109 (MRRSRSSAAA…ATPTSSASNL (109 aa)) is disordered. 2 positions are modified to phosphoserine: S18 and S21. At R43 the chain carries Omega-N-methylarginine. Over residues 79-100 (GEPPPPELALLPPPPPPPPTPA) the composition is skewed to pro residues. A phosphothreonine mark is found at T98, T101, and T103. Residues 148-260 (HTGGCHCGAV…TEEFNGSDWE (113 aa)) form the CENP-V/GFA domain. Residues C152, C154, C172, C174, C177, C216, and C219 each contribute to the Zn(2+) site. A Phosphoserine modification is found at S257.

Belongs to the Gfa family. It depends on Zn(2+) as a cofactor.

It is found in the chromosome. The protein localises to the centromere. The protein resides in the kinetochore. It localises to the nucleus. Its subcellular location is the cytoplasm. It is found in the cytoskeleton. The protein localises to the spindle. Functionally, required for distribution of pericentromeric heterochromatin in interphase nuclei and for centromere formation and organization, chromosome alignment and cytokinesis. The sequence is that of Centromere protein V (CENPV) from Homo sapiens (Human).